The primary structure comprises 216 residues: uncharacterized protein (216 aa).

The next 4 membrane-spanning stretches (helical) occupy residues 5 to 27 (ISLI…IAFS), 98 to 120 (FLSF…VFLL), 125 to 147 (VLIW…TFTN), and 185 to 207 (GTLF…GILG).

It localises to the cell membrane. This is an uncharacterized protein from Aquifex aeolicus (strain VF5).